Consider the following 596-residue polypeptide: (E)-beta-ocimene synthase, chloroplastic (596 aa).

Residues 1–35 (MAITHYQMASFQSSFHFCMLRKTLRQKSSLHFAKR) constitute a chloroplast transit peptide. The (2E)-geranyl diphosphate site is built by Arg-307, Asp-344, Asp-348, Arg-485, and Asn-488. The Mg(2+) site is built by Asp-344 and Asp-348. Positions 344-348 (DDIYD) match the DDXXD motif motif. Residues Asn-488, Ala-492, and Glu-496 each coordinate Mg(2+).

This sequence belongs to the terpene synthase family. Tpsb subfamily. The cofactor is Mg(2+). Requires Mn(2+) as cofactor. Highly expressed in leaves, stems and disk florets. Detected in roots.

The protein resides in the plastid. It localises to the chloroplast. It catalyses the reaction (2E)-geranyl diphosphate = (E)-beta-ocimene + diphosphate. The protein operates within secondary metabolite biosynthesis; terpenoid biosynthesis. Functionally, monoterpene synthase involved in the biosynthesis of (E)-beta-ocimene as the major product and trace amounts of (Z)-beta-ocimene. Can only accept geranyl diphosphate as substrate. The polypeptide is (E)-beta-ocimene synthase, chloroplastic (Matricaria chamomilla var. recutita (German chamomile)).